The chain runs to 260 residues: Indole-3-glycerol phosphate synthase (260 aa).

This sequence belongs to the TrpC family.

It catalyses the reaction 1-(2-carboxyphenylamino)-1-deoxy-D-ribulose 5-phosphate + H(+) = (1S,2R)-1-C-(indol-3-yl)glycerol 3-phosphate + CO2 + H2O. It participates in amino-acid biosynthesis; L-tryptophan biosynthesis; L-tryptophan from chorismate: step 4/5. This chain is Indole-3-glycerol phosphate synthase, found in Thermoanaerobacter pseudethanolicus (strain ATCC 33223 / 39E) (Clostridium thermohydrosulfuricum).